Consider the following 396-residue polypeptide: Tryptophan synthase beta chain (396 aa).

An N6-(pyridoxal phosphate)lysine modification is found at K86.

The protein belongs to the TrpB family. Tetramer of two alpha and two beta chains. Pyridoxal 5'-phosphate is required as a cofactor.

It carries out the reaction (1S,2R)-1-C-(indol-3-yl)glycerol 3-phosphate + L-serine = D-glyceraldehyde 3-phosphate + L-tryptophan + H2O. Its pathway is amino-acid biosynthesis; L-tryptophan biosynthesis; L-tryptophan from chorismate: step 5/5. The beta subunit is responsible for the synthesis of L-tryptophan from indole and L-serine. The protein is Tryptophan synthase beta chain of Vibrio atlanticus (strain LGP32) (Vibrio splendidus (strain Mel32)).